A 346-amino-acid chain; its full sequence is Phosphate acyltransferase (346 aa).

It belongs to the PlsX family. Homodimer. Probably interacts with PlsY.

The protein resides in the cytoplasm. The enzyme catalyses a fatty acyl-[ACP] + phosphate = an acyl phosphate + holo-[ACP]. It participates in lipid metabolism; phospholipid metabolism. Its function is as follows. Catalyzes the reversible formation of acyl-phosphate (acyl-PO(4)) from acyl-[acyl-carrier-protein] (acyl-ACP). This enzyme utilizes acyl-ACP as fatty acyl donor, but not acyl-CoA. In Deinococcus geothermalis (strain DSM 11300 / CIP 105573 / AG-3a), this protein is Phosphate acyltransferase.